A 245-amino-acid chain; its full sequence is 1-(5-phosphoribosyl)-5-[(5-phosphoribosylamino)methylideneamino] imidazole-4-carboxamide isomerase (245 aa).

Asp-7 functions as the Proton acceptor in the catalytic mechanism. The Proton donor role is filled by Asp-129.

It belongs to the HisA/HisF family.

It localises to the cytoplasm. It carries out the reaction 1-(5-phospho-beta-D-ribosyl)-5-[(5-phospho-beta-D-ribosylamino)methylideneamino]imidazole-4-carboxamide = 5-[(5-phospho-1-deoxy-D-ribulos-1-ylimino)methylamino]-1-(5-phospho-beta-D-ribosyl)imidazole-4-carboxamide. It participates in amino-acid biosynthesis; L-histidine biosynthesis; L-histidine from 5-phospho-alpha-D-ribose 1-diphosphate: step 4/9. This chain is 1-(5-phosphoribosyl)-5-[(5-phosphoribosylamino)methylideneamino] imidazole-4-carboxamide isomerase, found in Pectobacterium atrosepticum (strain SCRI 1043 / ATCC BAA-672) (Erwinia carotovora subsp. atroseptica).